A 407-amino-acid polypeptide reads, in one-letter code: uncharacterized protein (407 aa).

Disordered regions lie at residues Met-1–Pro-62 and Ser-350–Ser-379. Residues Pro-17–Ala-30 are compositionally biased toward basic and acidic residues.

This is an uncharacterized protein from Ictaluridae (bullhead catfishes).